We begin with the raw amino-acid sequence, 147 residues long: Hemoglobin subunit epsilon-M (147 aa).

The Globin domain maps to 3-147 (HFTPEDKTNI…VSSALGHKYH (145 aa)). 2 positions are modified to phosphoserine: serine 14 and serine 51. Positions 64 and 93 each coordinate heme b.

This sequence belongs to the globin family. Red blood cells.

In terms of biological role, hemoglobin epsilon chain is a beta-type chain found in early embryos. This is Hemoglobin subunit epsilon-M (HBE1) from Didelphis virginiana (North American opossum).